The following is a 365-amino-acid chain: Protein mab-21-like (365 aa).

The protein belongs to the mab-21 family.

The protein is Protein mab-21-like of Aedes aegypti (Yellowfever mosquito).